The sequence spans 356 residues: uncharacterized protein (356 aa).

NADP(+) is bound at residue 37-44 (TGASSGIG). S168 lines the substrate pocket. The Proton acceptor role is filled by Y181.

It belongs to the short-chain dehydrogenases/reductases (SDR) family.

This is an uncharacterized protein from Bacillus subtilis (strain 168).